The sequence spans 636 residues: Ligand-gated ion channel 4 (636 aa).

Residues 1–25 form the signal peptide; that stretch reads MVICHSCTTFCILLVIDLVPCRIVG. Residues 26–326 are Extracellular-facing; that stretch reads MENVENRVMF…IHMHRRPLFY (301 aa). 4 N-linked (GlcNAc...) asparagine glycosylation sites follow: N45, N141, N179, and N227. C240 and C254 are oxidised to a cystine. A glycan (N-linked (GlcNAc...) asparagine) is linked at N284. Transmembrane regions (helical) follow at residues 327-347, 357-377, and 383-403; these read VFNHIVPCVLISSMAVLGFLM, MIITTLLSMGVYLQSITESIP, and VPLIGMYYVSSLLMVCLATCV. Residues 404-602 are Cytoplasmic-facing; it reads NVITLNMHRN…QLASVVDRLL (199 aa). A helical transmembrane segment spans residues 603-623; that stretch reads LCLFCTATLFTIICLLIVPVV.

This sequence belongs to the ligand-gated ion channel (TC 1.A.9) family.

It is found in the postsynaptic cell membrane. The protein localises to the cell membrane. Acetylcholine receptor. The chain is Ligand-gated ion channel 4 from Caenorhabditis briggsae.